An 86-amino-acid polypeptide reads, in one-letter code: Small ribosomal subunit protein bS18 (86 aa).

Belongs to the bacterial ribosomal protein bS18 family. Part of the 30S ribosomal subunit. Forms a tight heterodimer with protein bS6.

Functionally, binds as a heterodimer with protein bS6 to the central domain of the 16S rRNA, where it helps stabilize the platform of the 30S subunit. This is Small ribosomal subunit protein bS18 from Herpetosiphon aurantiacus (strain ATCC 23779 / DSM 785 / 114-95).